Reading from the N-terminus, the 236-residue chain is Phosphoribosylaminoimidazole-succinocarboxamide synthase (236 aa).

The protein belongs to the SAICAR synthetase family.

It carries out the reaction 5-amino-1-(5-phospho-D-ribosyl)imidazole-4-carboxylate + L-aspartate + ATP = (2S)-2-[5-amino-1-(5-phospho-beta-D-ribosyl)imidazole-4-carboxamido]succinate + ADP + phosphate + 2 H(+). Its pathway is purine metabolism; IMP biosynthesis via de novo pathway; 5-amino-1-(5-phospho-D-ribosyl)imidazole-4-carboxamide from 5-amino-1-(5-phospho-D-ribosyl)imidazole-4-carboxylate: step 1/2. In Campylobacter jejuni (strain RM1221), this protein is Phosphoribosylaminoimidazole-succinocarboxamide synthase.